The sequence spans 810 residues: Calpain-3 (810 aa).

Low complexity predominate over residues 9–27; it reads VAQQTAAGSVPSTTSTTTE. The interval 9–31 is disordered; the sequence is VAQQTAAGSVPSTTSTTTEGTGG. In terms of domain architecture, Calpain catalytic spans 68-410; that stretch reads LYEDPDFPPN…FTKLEICNLT (343 aa). Catalysis depends on residues Cys-123, His-327, and Asn-351. The interval 411 to 579 is domain III; that stretch reads PDTLEADKLQ…KRSLSEEVEN (169 aa). The segment at 578–639 is disordered; it reads ENMIEADRPS…SAKAREKSEE (62 aa). Residues 580–638 are linker; sequence MIEADRPSKKKKGKPIIFVSDRANSNKELTTDEDAGKDGEKTHVDEKKRSSAKAREKSE. A compositionally biased stretch (basic and acidic residues) spans 613–639; sequence DAGKDGEKTHVDEKKRSSAKAREKSEE. 4 EF-hand domains span residues 638 to 672, 681 to 714, 711 to 746, and 776 to 810; these read EEET…VVKK, FELE…DKIK, DKIK…AGFR, and VRLD…TMYA. A domain IV region spans residues 639–809; the sequence is EETQFRNIFR…VLEWLQLTMY (171 aa). Ca(2+) contacts are provided by Ala-651, Asp-654, Glu-656, Glu-661, Asp-694, Asp-696, Ser-698, Lys-700, Glu-705, Asp-724, Asp-726, Ser-728, Thr-730, Glu-735, Asp-789, Asp-791, Asp-793, and Ile-795.

It belongs to the peptidase C2 family. As to quaternary structure, homodimer; via EF-hand domain 4. Interacts with TTN/titin. Interacts with CMYA5; this interaction, which results in CMYA5 proteolysis, may protect CAPN3 from autolysis. Interacts with SIMC1. Interacts with UTP25; the interaction is required for CAPN3 translocation to the nucleolus. In terms of tissue distribution, skeletal muscle. Low levels in spleen, intestine and bone.

Its subcellular location is the cytoplasm. It is found in the nucleus. The protein resides in the nucleolus. The catalysed reaction is Broad endopeptidase activity.. Activated by micromolar concentrations of calcium and inhibited by calpastatin. Its function is as follows. Calcium-regulated non-lysosomal thiol-protease. Proteolytically cleaves CTBP1. Mediates, with UTP25, the proteasome-independent degradation of p53/TP53. The protein is Calpain-3 (CAPN3) of Gallus gallus (Chicken).